A 227-amino-acid polypeptide reads, in one-letter code: 2-C-methyl-D-erythritol 4-phosphate cytidylyltransferase (227 aa).

Belongs to the IspD/TarI cytidylyltransferase family. IspD subfamily.

It catalyses the reaction 2-C-methyl-D-erythritol 4-phosphate + CTP + H(+) = 4-CDP-2-C-methyl-D-erythritol + diphosphate. It participates in isoprenoid biosynthesis; isopentenyl diphosphate biosynthesis via DXP pathway; isopentenyl diphosphate from 1-deoxy-D-xylulose 5-phosphate: step 2/6. Its function is as follows. Catalyzes the formation of 4-diphosphocytidyl-2-C-methyl-D-erythritol from CTP and 2-C-methyl-D-erythritol 4-phosphate (MEP). The chain is 2-C-methyl-D-erythritol 4-phosphate cytidylyltransferase from Deinococcus geothermalis (strain DSM 11300 / CIP 105573 / AG-3a).